The sequence spans 328 residues: Putative thiosulfate sulfurtransferase mpst-1 (328 aa).

2 Rhodanese domains span residues 22–162 (NKEG…EVST) and 202–320 (KTSE…KKIS). C278 acts as the Cysteine persulfide intermediate in catalysis.

It carries out the reaction thiosulfate + hydrogen cyanide = thiocyanate + sulfite + 2 H(+). This is Putative thiosulfate sulfurtransferase mpst-1 (mpst-1) from Caenorhabditis elegans.